The sequence spans 112 residues: Small ribosomal subunit protein bS6 (112 aa).

The protein belongs to the bacterial ribosomal protein bS6 family.

Functionally, binds together with bS18 to 16S ribosomal RNA. The polypeptide is Small ribosomal subunit protein bS6 (rpsF) (Chlamydia pneumoniae (Chlamydophila pneumoniae)).